A 179-amino-acid chain; its full sequence is uncharacterized protein (179 aa).

A helical membrane pass occupies residues 5-25 (MLAGIGIGVAAALGVAAVASL).

To Rickettsia 17 kDa surface antigen.

The protein resides in the membrane. This is an uncharacterized protein from Escherichia coli O6:H1 (strain CFT073 / ATCC 700928 / UPEC).